The following is a 184-amino-acid chain: Tumor protein D52 (184 aa).

The tract at residues 1-43 (MDRGEQGLLRTDTVPEEAEDAAATISATETLSEEEQEELRREL) is disordered. The stretch at 22 to 74 (AATISATETLSEEEQEELRRELAKVEEEIQTLSQVLAAREKHLAEIKRKLGIN) forms a coiled coil. Position 136 is a phosphoserine (Ser-136). The tract at residues 147–184 (KVGGTKPAGGDFGEVLNSTANASATSGEPVPEQTQEGL) is disordered. The segment covering 162-184 (LNSTANASATSGEPVPEQTQEGL) has biased composition (polar residues).

It belongs to the TPD52 family. Forms a homodimer or heterodimer with other members of the family. In terms of processing, phosphorylated in a calcium/calmodulin-dependent manner.

The chain is Tumor protein D52 (TPD52) from Oryctolagus cuniculus (Rabbit).